The sequence spans 573 residues: Urease subunit alpha (573 aa).

Residues His-139, His-141, and Lys-222 each contribute to the Ni(2+) site. Residue Lys-222 is modified to N6-carboxylysine. His-224 lines the substrate pocket. Ni(2+) is bound by residues His-251 and His-277. His-325 serves as the catalytic Proton donor. Ni(2+) is bound at residue Asp-365.

This sequence belongs to the metallo-dependent hydrolases superfamily. Urease alpha subunit family. In terms of assembly, heterotrimer of UreA (gamma), UreB (beta) and UreC (alpha) subunits. Three heterotrimers associate to form the active enzyme. The cofactor is Ni cation. Post-translationally, carboxylation allows a single lysine to coordinate two nickel ions.

It localises to the cytoplasm. The catalysed reaction is urea + 2 H2O + H(+) = hydrogencarbonate + 2 NH4(+). The protein operates within nitrogen metabolism; urea degradation; CO(2) and NH(3) from urea (urease route): step 1/1. This is Urease subunit alpha from Flavobacterium johnsoniae (strain ATCC 17061 / DSM 2064 / JCM 8514 / BCRC 14874 / CCUG 350202 / NBRC 14942 / NCIMB 11054 / UW101) (Cytophaga johnsonae).